Reading from the N-terminus, the 2462-residue chain is Serine/threonine-protein kinase Wnk (2462 aa).

Disordered regions lie at residues 18 to 133, 146 to 248, and 365 to 461; these read NRAR…ASKS, NTLP…KSSS, and EDDV…DDDP. Composition is skewed to polar residues over residues 29–58 and 65–78; these read DGTT…NIQK and NRSA…NPTS. Low complexity predominate over residues 94 to 124; sequence TLSAHTSTSSTTSIQSSPIEPASSLPTLNTT. The span at 146 to 155 shows a compositional bias: polar residues; sequence NTLPGKTASS. Composition is skewed to basic and acidic residues over residues 190-205, 237-247, and 396-413; these read QSRE…KIEP, DTKKMEARKSS, and QSEK…KAES. Over residues 414-452 the composition is skewed to low complexity; sequence SEASAEEAAVTGSSTDASASPLPSTSLVSTTSSATSITK. Positions 471-729 constitute a Protein kinase domain; the sequence is FKYDKEVGRG…CNELLESEFF (259 aa). ATP contacts are provided by residues serine 481, 551–554, and lysine 601; that span reads TELM. Residue aspartate 618 is the Proton acceptor of the active site. 2 positions are modified to phosphoserine; by autocatalysis: serine 628 and serine 632. Disordered regions lie at residues 844 to 873, 893 to 923, and 1006 to 1055; these read LQKQ…DGVK, LALS…QPVQ, and PQQQ…LQQQ. The segment covering 855–870 has biased composition (acidic residues); the sequence is VDEDEEEEEESEDEED. Polar residues predominate over residues 893–918; the sequence is LALSTNSVEPQQLSTRSNTSIPNSGI. Low complexity-rich tracts occupy residues 1006 to 1034 and 1041 to 1055; these read PQQQ…QPQT and HEQQ…LQQQ. Positions 1142–1178 form a coiled coil; it reads AQHQLQQLQQQQLQQQQLQQQQQIQQQQLQQQQLQQQ. Polar residues predominate over residues 1236–1251; sequence QGGQVTLSDAQQQQHP. Disordered stretches follow at residues 1236–1256, 1322–1382, 1418–1465, 1554–1578, 1615–1699, 1762–1790, 1828–1895, 1929–1966, and 2122–2229; these read QGGQ…FSAV, QQQQ…EQIS, GALE…PKLS, LTRQ…SDIT, NIPN…KDKK, DTSE…GNQG, QASP…SVGS, HEKQ…SINQ, and THVQ…FIQS. Residues 1559–1568 are compositionally biased toward basic residues; that stretch reads STFRSHQRHR. The span at 1627-1641 shows a compositional bias: low complexity; sequence STPPTTTSTMSSSST. Residues 1642–1674 are compositionally biased toward polar residues; it reads ASRDAPNSSNDVTIGSGSVSRKTSTASEYTSLS. Polar residues-rich tracts occupy residues 1828-1852, 1861-1894, and 1943-1966; these read QASP…TKPN, SVGQ…NSVG, and SATS…SINQ. A compositionally biased stretch (low complexity) spans 2125–2136; sequence QQPSNLQPQQQS. Residues 2137–2160 show a composition bias toward polar residues; it reads VHPNMTQQPQQTPLNGHPSMVNTL. Over residues 2161 to 2211 the composition is skewed to low complexity; that stretch reads QQQPPQQSLPMQTIQSQQQQHNQMPIISQQQQQQILMQQQQQQGSQQGSQQ. Polar residues predominate over residues 2212 to 2229; the sequence is FNLPGTQQTHPQHQFIQS.

Belongs to the protein kinase superfamily. Ser/Thr protein kinase family. WNK subfamily. Mg(2+) is required as a cofactor. In terms of processing, autophosphorylated. Autophosphorylation at Ser-628 and Ser-632 promotes its activity.

It localises to the cytoplasm. It carries out the reaction L-seryl-[protein] + ATP = O-phospho-L-seryl-[protein] + ADP + H(+). It catalyses the reaction L-threonyl-[protein] + ATP = O-phospho-L-threonyl-[protein] + ADP + H(+). With respect to regulation, activated in response to hyperosmotic stress: cell shrinkage promotes formation of a membraneless compartment that concentrates wnk-1 with its downstrem substrates. Activation requires autophosphorylation. Autophosphorylation and subsequent activation is inhibited by increases in intracellular Cl(-) or K(+). In terms of biological role, serine/threonine-protein kinase component of the WNK-SPAK/OSR1 kinase cascade, which plays an important role in the regulation of electrolyte homeostasis and regulatory volume increase in response to hyperosmotic stress. Wnk mediates regulatory volume increase in response to hyperosmotic stress by acting as a molecular crowding sensor, which senses cell shrinkage and mediates formation of a membraneless compartment by undergoing liquid-liquid phase separation. The membraneless compartment concentrates Wnk with its substrate Fray, promoting Wnk-dependent phosphorylation and activation of downstream kinase Fray. Following activation, Fray catalyzes phosphorylation of ion cotransporters Ncc69 and Irk1, regulating their activity. Phosphorylation of Na-K-Cl cotransporter Ncc69 promotes its activation and ion influx. Involved in circadian rhythms in small ventral lateral (sLNv) pacemaker neurons: in the morning, Wnk activity is repressed by high levels of intracellular chloride; in contrast Wnk activation in the evening promotes the activation of the inwardly rectifying potassium channel Irk1 via Fray. Acts as a positive regulator of the canonical Wnt signaling pathway during wing disk development. This Drosophila melanogaster (Fruit fly) protein is Serine/threonine-protein kinase Wnk.